The sequence spans 354 residues: Serum paraoxonase/lactonase 3 (354 aa).

C42 and C352 are disulfide-bonded. An N-linked (GlcNAc...) asparagine glycan is attached at N50. Residues E53 and D54 each contribute to the Ca(2+) site. The active-site Proton acceptor is H114. I116 is a binding site for Ca(2+). Residue S165 is modified to Phosphoserine. Ca(2+) is bound by residues N167, N168, N223, D268, and N269. N269 carries an N-linked (GlcNAc...) asparagine glycan.

This sequence belongs to the paraoxonase family. Homodimer. Ca(2+) serves as cofactor. Glycosylated. Post-translationally, the signal sequence is not cleaved.

Its subcellular location is the secreted. It localises to the extracellular space. It carries out the reaction a phenyl acetate + H2O = a phenol + acetate + H(+). It catalyses the reaction An aryl dialkyl phosphate + H2O = dialkyl phosphate + an aryl alcohol.. The catalysed reaction is an N-acyl-L-homoserine lactone + H2O = an N-acyl-L-homoserine + H(+). Its function is as follows. Has low activity towards the organophosphate paraxon and aromatic carboxylic acid esters. Rapidly hydrolyzes lactones such as statin prodrugs (e.g. lovastatin). Hydrolyzes aromatic lactones and 5- or 6-member ring lactones with aliphatic substituents but not simple lactones or those with polar substituents. The protein is Serum paraoxonase/lactonase 3 (PON3) of Oryctolagus cuniculus (Rabbit).